The following is a 445-amino-acid chain: Probable protein phosphatase 2C 14 (445 aa).

A PPM-type phosphatase domain is found at 120–440; that stretch reads GFGVVSRNGK…DDITVVIIDL (321 aa). Aspartate 156, glycine 157, and aspartate 318 together coordinate Mn(2+). Residues 384 to 404 form a disordered region; that stretch reads NSENESPSLNREIGSSPSKSP. The span at 390 to 404 shows a compositional bias: polar residues; the sequence is PSLNREIGSSPSKSP. Position 431 (aspartate 431) interacts with Mn(2+).

Belongs to the PP2C family. Mg(2+) is required as a cofactor. The cofactor is Mn(2+).

The enzyme catalyses O-phospho-L-seryl-[protein] + H2O = L-seryl-[protein] + phosphate. The catalysed reaction is O-phospho-L-threonyl-[protein] + H2O = L-threonyl-[protein] + phosphate. The protein is Probable protein phosphatase 2C 14 of Arabidopsis thaliana (Mouse-ear cress).